The sequence spans 585 residues: Parathyroid hormone/parathyroid hormone-related peptide receptor (585 aa).

A signal peptide spans 1–26; the sequence is MGAARIAPGLALLLCCPVLSSAYALV. Residues 27 to 184 are Extracellular-facing; it reads DADDVMTKEE…REREVFDRLG (158 aa). Cystine bridges form between Cys-48–Cys-113, Cys-104–Cys-144, and Cys-127–Cys-166. The interval 66 to 100 is disordered; that stretch reads DKGWASAPTSGKPRKEKASGKLYPESGEDTGSRHQ. Residues Asn-147, Asn-157, Asn-162, and Asn-172 are each glycosylated (N-linked (GlcNAc...) asparagine). The chain crosses the membrane as a helical span at residues 185–208; the sequence is MIYTVGYSVSLASLTVAVLILAYF. The Cytoplasmic portion of the chain corresponds to 209-215; sequence RRLHCTR. A helical membrane pass occupies residues 216 to 235; sequence NYIHMHLFLSFMLRAVSIFV. Topologically, residues 236–277 are extracellular; the sequence is KDAVLYSGATLDEAERLTEEELRAIAQAPLPPVAATSYVGCR. A helical transmembrane segment spans residues 278 to 301; sequence VAVTFFLYFLATNYYWILVEGLYL. Topologically, residues 302 to 315 are cytoplasmic; the sequence is HSLIFMAFFSEKKY. The helical transmembrane segment at 316 to 337 threads the bilayer; the sequence is LWGFTVFGWGLPAIFVAVWVSV. The Extracellular segment spans residues 338 to 356; that stretch reads RATLANTGCWDLSSGNKKW. Residues 357–377 form a helical membrane-spanning segment; that stretch reads IIQVPILASIVLNFILFINIV. At 378 to 404 the chain is on the cytoplasmic side; it reads RVLATKLRETNAGRCDTRQQYRKLLKS. The chain crosses the membrane as a helical span at residues 405-423; sequence TLVLMPLFGVHYIVFMATP. At 424–435 the chain is on the extracellular side; sequence YTEVSGTLWQVQ. The helical transmembrane segment at 436–458 threads the bilayer; that stretch reads MHYEMLFNSFQGFFVAIIYCFCN. Residues 459-585 are Cytoplasmic-facing; sequence GEVQAEIKKS…LLQEEWETVM (127 aa). The short motif at 469-472 is the Important for interaction with G proteins element; that stretch reads WSRW. Residue Thr-543 is modified to Phosphothreonine.

Belongs to the G-protein coupled receptor 2 family. Homodimer in the absence of bound ligand. Peptide hormone binding leads to dissociation of the homodimer. Post-translationally, N-glycosylated.

It localises to the cell membrane. G-protein-coupled receptor for parathyroid hormone (PTH) and for parathyroid hormone-related peptide (PTHLH). Ligand binding causes a conformation change that triggers signaling via guanine nucleotide-binding proteins (G proteins) and modulates the activity of downstream effectors, such as adenylate cyclase (cAMP). PTH1R is coupled to G(s) G alpha proteins and mediates activation of adenylate cyclase activity. PTHLH dissociates from PTH1R more rapidly than PTH; as consequence, the cAMP response induced by PTHLH decays faster than the response induced by PTH. The protein is Parathyroid hormone/parathyroid hormone-related peptide receptor (PTH1R) of Sus scrofa (Pig).